We begin with the raw amino-acid sequence, 279 residues long: Sarcosine/dimethylglycine N-methyltransferase (279 aa).

The protein belongs to the methyltransferase superfamily. As to quaternary structure, monomer.

The enzyme catalyses sarcosine + 2 S-adenosyl-L-methionine = glycine betaine + 2 S-adenosyl-L-homocysteine + 2 H(+). It carries out the reaction sarcosine + S-adenosyl-L-methionine = N,N-dimethylglycine + S-adenosyl-L-homocysteine + H(+). It catalyses the reaction N,N-dimethylglycine + S-adenosyl-L-methionine = glycine betaine + S-adenosyl-L-homocysteine + H(+). It participates in amine and polyamine biosynthesis; betaine biosynthesis via glycine pathway; betaine from glycine: step 2/3. The protein operates within amine and polyamine biosynthesis; betaine biosynthesis via glycine pathway; betaine from glycine: step 3/3. Its activity is regulated as follows. p-chloromercuribenzoate acid inhibits 23% of the SDMT activities on sarcosine and dimethylglycine, and S-adenosylhomocysteine (AdoHcy) inhibits completely GSMT activities. In terms of biological role, catalyzes the methylation of sarcosine and dimethylglycine to dimethylglycine and betaine, respectively, with S-adenosylmethionine (AdoMet) acting as the methyl donor. It has strict specificity for sarcosine and dimethylglycine as the methyl group acceptors. The polypeptide is Sarcosine/dimethylglycine N-methyltransferase (Halorhodospira halochloris (Ectothiorhodospira halochloris)).